Here is a 311-residue protein sequence, read N- to C-terminus: Pantothenate synthetase (311 aa).

43–50 serves as a coordination point for ATP; the sequence is MGALHEGH. The Proton donor role is filled by histidine 50. Position 75 (glutamine 75) interacts with (R)-pantoate. A beta-alanine-binding site is contributed by glutamine 75. Position 161–164 (161–164) interacts with ATP; sequence GEKD. Residue glutamine 167 participates in (R)-pantoate binding. ATP contacts are provided by residues valine 190 and 198 to 201; that span reads MSSR.

Belongs to the pantothenate synthetase family. In terms of assembly, homodimer.

It localises to the cytoplasm. The enzyme catalyses (R)-pantoate + beta-alanine + ATP = (R)-pantothenate + AMP + diphosphate + H(+). Its pathway is cofactor biosynthesis; (R)-pantothenate biosynthesis; (R)-pantothenate from (R)-pantoate and beta-alanine: step 1/1. In terms of biological role, catalyzes the condensation of pantoate with beta-alanine in an ATP-dependent reaction via a pantoyl-adenylate intermediate. The chain is Pantothenate synthetase from Mycolicibacterium vanbaalenii (strain DSM 7251 / JCM 13017 / BCRC 16820 / KCTC 9966 / NRRL B-24157 / PYR-1) (Mycobacterium vanbaalenii).